Here is a 565-residue protein sequence, read N- to C-terminus: MATYIQRVQCISALLSVVLTTLVSCQIPRDRLSNIGVIVDEGKSLKIAGSHESRYIVLSLVPGVDLENGCGTAQVIQYKSLLNRLLIPLRDALDLQEALITVTNDTMTSADVPQSRFFGAVIGTIALGVATSAQITAGIALAEAREAKRDIALIKESMTKTHKSIELLQNAVGEQILALKTLQDFVNDEIKPAISELGCETAALRLGIKLTQHYSELLTAFGSNFGTIGEKSLTLQALSSLYSANITEIMTTIRTGQSNIYDVIYTEQIKGTVIDVDLERYMVTLSVKIPILSEVPGVLIHKASSISYNIDGEEWYVTVPSHILSRASFLGGANIADCVESRLTYICPRDPAQLIPDSQQKCILGDTTRCPVTKVVDNLIPKFAFVNGGVVANCIASTCTCGTGRRPISQDRSKGVVFLTHDNCGLIGVNGIELYANRKGHDATWGVQNLTVGPAIAIRPVDISLNLAAATDFLQDSRAELEKARKILSEVGRWYNSGATLITIIVVMIVVLVVIIVIVIVLYRLRRSMLMSNPAGRISRDTYTLEPKIRHMYTNGGFDAMTEKR.

The signal sequence occupies residues 1–25 (MATYIQRVQCISALLSVVLTTLVSC). The Extracellular segment spans residues 26–500 (QIPRDRLSNI…VGRWYNSGAT (475 aa)). A disulfide bridge connects residues Cys-70 and Cys-199. Residue Asn-104 is glycosylated (N-linked (GlcNAc...) asparagine; by host). The fusion peptide stretch occupies residues 117 to 141 (FFGAVIGTIALGVATSAQITAGIAL). Residues 142–170 (AEAREAKRDIALIKESMTKTHKSIELLQN) adopt a coiled-coil conformation. A glycan (N-linked (GlcNAc...) asparagine; by host) is linked at Asn-245. Positions 269 to 307 (IKGTVIDVDLERYMVTLSVKIPILSEVPGVLIHKASSIS) are leucine-zipper. Cystine bridges form between Cys-338–Cys-347, Cys-362–Cys-370, Cys-394–Cys-399, and Cys-401–Cys-424. Asn-449 carries N-linked (GlcNAc...) asparagine; by host glycosylation. Residues 466 to 491 (NLAAATDFLQDSRAELEKARKILSEV) are a coiled coil. Residues 501–521 (LITIIVVMIVVLVVIIVIVIV) traverse the membrane as a helical segment. Over 522–565 (LYRLRRSMLMSNPAGRISRDTYTLEPKIRHMYTNGGFDAMTEKR) the chain is Cytoplasmic.

This sequence belongs to the paramyxoviruses fusion glycoprotein family. Homotrimer of disulfide-linked F1-F2. Interacts with HN and M proteins. In terms of processing, in natural infection, inactive F0 is matured into F1 and F2 outside the cell by one or more trypsin-like, arginine-specific endoprotease secreted by the bronchial epithelial cells. One identified protease that may be involved in this process is tryptase Clara. Unlike most paramyxoviruses, Sendai F0 processing occurs on the cell surface and induces a conformational change in the protein that unmasks the fusion peptide. F0 maturation is a primary determinant for organ tropism and pathogenicity. F1 and F2 display interchain and intrachain disulfide bonds, that are necessary for correct folding and intracellular transport. N-glycosylated; glycans consist of a mixture of high mannose-type oligosaccharides and of complex-type oligosaccharides. Glycosylation at Asn-245 is essential for membrane localization and F0 cleavage.

It is found in the virion membrane. Its subcellular location is the host cell membrane. Class I viral fusion protein. Under the current model, the protein has at least 3 conformational states: pre-fusion native state, pre-hairpin intermediate state, and post-fusion hairpin state. During viral and plasma cell membrane fusion, the heptad repeat (HR) regions assume a trimer-of-hairpins structure, positioning the fusion peptide in close proximity to the C-terminal region of the ectodomain. The formation of this structure appears to drive apposition and subsequent fusion of viral and plasma cell membranes. Directs fusion of viral and cellular membranes leading to delivery of the nucleocapsid into the cytoplasm. This fusion is pH independent and occurs directly at the outer cell membrane. The trimer of F1-F2 (F protein) interacts with HN tetramer at the virion surface. Upon HN binding to its cellular receptor, the hydrophobic fusion peptide is unmasked and interacts with the cellular membrane, inducing the fusion between cell and virion membranes. Later in infection, F proteins expressed at the plasma membrane of infected cells could mediate fusion with adjacent cells to form syncytia, a cytopathic effect that could lead to tissue necrosis. In Sendai virus (strain Hamamatsu) (SeV), this protein is Fusion glycoprotein F0 (F).